Consider the following 449-residue polypeptide: Polyadenylation factor subunit 2 (449 aa).

WD repeat units follow at residues 77 to 116, 119 to 158, 161 to 200, 203 to 242, 245 to 285, 288 to 328, and 337 to 376; these read KVKH…FESI, AHDS…VKVL, AHTE…QERV, GHHW…NVST, GLKH…RELQ, RDDM…SNST, and AHEK…DPNA. Positions 411 to 432 are disordered; the sequence is LPPANETNLGTPQPSILGSESI. Polar residues predominate over residues 415-432; the sequence is NETNLGTPQPSILGSESI.

It localises to the nucleus. Required for 3'-end cleavage and polyadenylation of pre-mRNAs. Also involved in chromosome segregation where it has a role in chromosome attachment to the mitotic spindle. This is Polyadenylation factor subunit 2 (PSF2) from Eremothecium gossypii (strain ATCC 10895 / CBS 109.51 / FGSC 9923 / NRRL Y-1056) (Yeast).